A 205-amino-acid chain; its full sequence is Guanylate kinase (205 aa).

A Guanylate kinase-like domain is found at 5-184 (GLLIVLSGPS…AVQKIKGIVE (180 aa)). 12–19 (GPSGVGKG) contacts ATP.

It belongs to the guanylate kinase family.

Its subcellular location is the cytoplasm. The enzyme catalyses GMP + ATP = GDP + ADP. Essential for recycling GMP and indirectly, cGMP. The sequence is that of Guanylate kinase from Listeria monocytogenes serotype 4b (strain F2365).